We begin with the raw amino-acid sequence, 476 residues long: Argininosuccinate lyase (476 aa).

Belongs to the lyase 1 family. Argininosuccinate lyase subfamily.

The protein localises to the cytoplasm. It catalyses the reaction 2-(N(omega)-L-arginino)succinate = fumarate + L-arginine. It functions in the pathway amino-acid biosynthesis; L-arginine biosynthesis; L-arginine from L-ornithine and carbamoyl phosphate: step 3/3. The polypeptide is Argininosuccinate lyase (Nitrosospira multiformis (strain ATCC 25196 / NCIMB 11849 / C 71)).